A 189-amino-acid polypeptide reads, in one-letter code: ATP synthase subunit b (189 aa).

A helical transmembrane segment spans residues 7–27 (LLIAALAVAPLAHAAEGGFVG).

This sequence belongs to the ATPase B chain family. In terms of assembly, F-type ATPases have 2 components, F(1) - the catalytic core - and F(0) - the membrane proton channel. F(1) has five subunits: alpha(3), beta(3), gamma(1), delta(1), epsilon(1). F(0) has three main subunits: a(1), b(2) and c(10-14). The alpha and beta chains form an alternating ring which encloses part of the gamma chain. F(1) is attached to F(0) by a central stalk formed by the gamma and epsilon chains, while a peripheral stalk is formed by the delta and b chains.

It is found in the cell inner membrane. Its function is as follows. F(1)F(0) ATP synthase produces ATP from ADP in the presence of a proton or sodium gradient. F-type ATPases consist of two structural domains, F(1) containing the extramembraneous catalytic core and F(0) containing the membrane proton channel, linked together by a central stalk and a peripheral stalk. During catalysis, ATP synthesis in the catalytic domain of F(1) is coupled via a rotary mechanism of the central stalk subunits to proton translocation. In terms of biological role, component of the F(0) channel, it forms part of the peripheral stalk, linking F(1) to F(0). This chain is ATP synthase subunit b, found in Hyphomonas neptunium (strain ATCC 15444).